The following is a 61-amino-acid chain: Small ribosomal subunit protein uS14 (61 aa).

Zn(2+) is bound by residues C24, C27, C40, and C43.

The protein belongs to the universal ribosomal protein uS14 family. Zinc-binding uS14 subfamily. Part of the 30S ribosomal subunit. Contacts proteins S3 and S10. Requires Zn(2+) as cofactor.

In terms of biological role, binds 16S rRNA, required for the assembly of 30S particles and may also be responsible for determining the conformation of the 16S rRNA at the A site. This is Small ribosomal subunit protein uS14 from Borreliella burgdorferi (strain ATCC 35210 / DSM 4680 / CIP 102532 / B31) (Borrelia burgdorferi).